The primary structure comprises 416 residues: Serine protease inhibitor A3K (416 aa).

The signal sequence occupies residues 1-20; it reads MAFIAALGLLMAGICPAVLC. 4 N-linked (GlcNAc...) asparagine glycosylation sites follow: Asn-102, Asn-182, Asn-220, and Asn-267. Residues 365 to 392 form an RCL region; that stretch reads GTEGAAATAVTAALKSLPQTIPLLNFNR.

Belongs to the serpin family. Post-translationally, N-glycosylated. As to expression, liver and plasma.

It localises to the secreted. Functionally, binds to and inhibits kallikreins. Inhibits trypsin but not chymotrypsin or elastase. In Rattus norvegicus (Rat), this protein is Serine protease inhibitor A3K (Serpina3k).